A 304-amino-acid chain; its full sequence is E3 ubiquitin-protein ligase RNF144B (304 aa).

Positions 27–245 (PLVTCKLCLC…YDRGPCRNKL (219 aa)) are TRIAD supradomain. Zn(2+)-binding residues include Cys-31, Cys-34, Cys-54, Cys-57, Cys-122, Cys-127, Cys-146, Cys-149, Cys-154, Cys-157, His-162, Cys-167, Cys-194, and Cys-197. The segment at 31–81 (CKLCLCEQSLDKMTTLQECRCIFCTACLKQYMQLAIREGCGSPITCPDMVC) adopts an RING-type 1 zinc-finger fold. The segment at 102-167 (QLYQRLKFER…KDAWHAEVSC (66 aa)) adopts an IBR-type zinc-finger fold. Residues 194–223 (CPVCRVYIERNEGCAQMMCKNCKHTFCWYC) form an RING-type 2; atypical zinc finger. The active site involves Cys-207. Zn(2+) is bound by residues Cys-212, Cys-215, Cys-220, Cys-223, His-235, and Cys-241. Residues 259-279 (VVGILVGLGIIALVTSPLLLL) traverse the membrane as a helical segment.

This sequence belongs to the RBR family. RNF144 subfamily. Interacts with UBE2L3, UBE2L6 and LCMT2, as well as with BAX. Interacts with TBK1; this interaction inhibits TBK1 phosphorylation and 'Lys-63'-linked polyubiquitination. Auto-ubiquitinated.

The protein localises to the mitochondrion membrane. It localises to the cytoplasm. The catalysed reaction is [E2 ubiquitin-conjugating enzyme]-S-ubiquitinyl-L-cysteine + [acceptor protein]-L-lysine = [E2 ubiquitin-conjugating enzyme]-L-cysteine + [acceptor protein]-N(6)-ubiquitinyl-L-lysine.. It functions in the pathway protein modification; protein ubiquitination. Functionally, E3 ubiquitin-protein ligase which accepts ubiquitin from E2 ubiquitin-conjugating enzymes UBE2L3 and UBE2L6 in the form of a thioester and then directly transfers the ubiquitin to targeted substrates such as LCMT2, thereby promoting their degradation. Induces apoptosis via a p53/TP53-dependent but caspase-independent mechanism. Plays a crucial role in maintaining the genomic stability by controlling the degradation of multiple proteins involved in mitotic progression and DNA damage. Regulates epithelial homeostasis by mediating degradation of CDKN1A and isoform 2 of TP63. Plays a regulatory role in innate immunity by negatively regulating IRF3 activation and IFN-beta production. Mechanistically, inhibits TBK1 phosphorylation and 'Lys-63'-linked polyubiquitination independently of its E3 ligase activity. Alternatively, promotes 'Lys-27' and 'Lys-33'-linked ubiquitination of IFIH1/MDA5, promoting selective autophagic degradation of IFIH1/MDA5 to inhibit antiviral response. The sequence is that of E3 ubiquitin-protein ligase RNF144B (RNF144B) from Bos taurus (Bovine).